The primary structure comprises 438 residues: Aspartic proteinase nepenthesin-2 (438 aa).

Positions Met1–Ser24 are cleaved as a signal peptide. Residues Thr25 to Leu79 constitute a propeptide, activation peptide. Asn54 carries an N-linked (GlcNAc...) asparagine glycan. The 336-residue stretch at Tyr96–Val431 folds into the Peptidase A1 domain. Residue Asp114 is part of the active site. 6 disulfides stabilise this stretch: Cys124–Cys127, Cys130–Cys204, Cys151–Cys169, Cys156–Cys164, Cys241–Cys435, and Cys354–Cys395. The active site involves Asp315.

This sequence belongs to the peptidase A1 family.

It is found in the secreted. It catalyses the reaction Similar to pepsin, but also cleaves on either side of Asp and at Lys-|-Arg.. Its activity is regulated as follows. Inhibited by pepstatin and by diazoacetyl-D,L-norleucine methyl ester (DAN) in the presence of Cu(2+) ions. Functionally, extracellular proteinase found in the pitcher fluid of carnivorous plants. Digest prey for nitrogen uptake. This Nepenthes gracilis (Slender pitcher plant) protein is Aspartic proteinase nepenthesin-2 (nep2).